A 221-amino-acid chain; its full sequence is Urease accessory protein UreE (221 aa).

Basic and acidic residues predominate over residues 171-180 (HHGHDHDHGH). The segment at 171-221 (HHGHDHDHGHSHSHSHSHSHSHSHSHDHDHDHDHEHDVKGHVHGPGCGHKH) is disordered. Residues 181–193 (SHSHSHSHSHSHS) are compositionally biased toward basic residues. The segment covering 194 to 210 (HSHDHDHDHDHEHDVKG) has biased composition (basic and acidic residues).

The protein belongs to the UreE family.

It is found in the cytoplasm. In terms of biological role, involved in urease metallocenter assembly. Binds nickel. Probably functions as a nickel donor during metallocenter assembly. This Cupriavidus pinatubonensis (strain JMP 134 / LMG 1197) (Cupriavidus necator (strain JMP 134)) protein is Urease accessory protein UreE.